A 417-amino-acid chain; its full sequence is 26S proteasome regulatory subunit RPN14 (417 aa).

WD repeat units follow at residues 134 to 173 (AHVS…NPRT), 176 to 215 (GHRA…TIHT), 242 to 281 (ISTS…QTIQ), 285 to 325 (KFTC…CPVG), 330 to 371 (NEGT…PAIE), and 380 to 416 (SNDD…NLSN).

Belongs to the WD repeat PAAF1/RPN14 family. Associates with the 19S proteasome regulatory particle (RP). Interacts directly with RPT5 and RPT6.

Its subcellular location is the cytoplasm. It is found in the nucleus. Acts as a regulatory subunit of the 26 proteasome which is involved in the ATP-dependent degradation of ubiquitinated proteins. Is not a genuine component of the 26S proteasome, but an auxiliary factor that interacts with the proteasomal ATPase of 19S regulatory particle (RP). Acts as a chaperone which regulates the highly structured assembly of the 19S regulatory particle. Involved in the substrate specificity of the 26S proteasome and is especially involved in the degradation of ubiquitinated GCN4. May contribute to the stability of the 26S proteasome in some stress conditions. This Saccharomyces cerevisiae (strain ATCC 204508 / S288c) (Baker's yeast) protein is 26S proteasome regulatory subunit RPN14 (RPN14).